The primary structure comprises 241 residues: Probable transcriptional regulatory protein FMG_0893 (241 aa).

It belongs to the TACO1 family.

It localises to the cytoplasm. The sequence is that of Probable transcriptional regulatory protein FMG_0893 from Finegoldia magna (strain ATCC 29328 / DSM 20472 / WAL 2508) (Peptostreptococcus magnus).